A 280-amino-acid polypeptide reads, in one-letter code: BURP domain protein USPL1 (280 aa).

The N-terminal stretch at 1–24 (MASTFRLSISFLTLILFSLWVVEA) is a signal peptide. A BURP domain is found at 58 to 280 (YFTLNDLKLG…PLDNIVWVTK (223 aa)).

In terms of tissue distribution, expressed in cotyledons, radicle, floral buds, open flowers, roots and developing seeds, but not in leaves. Highly expressed in the root tips. Detected in young leaves, hypocotyls, stems and mature seed funiculum.

It is found in the protein storage vacuole. The protein resides in the golgi apparatus. The protein localises to the golgi stack. It localises to the trans-Golgi network. Its subcellular location is the prevacuolar compartment. Associated with the protein storage vacuole formation. The chain is BURP domain protein USPL1 from Arabidopsis thaliana (Mouse-ear cress).